Reading from the N-terminus, the 125-residue chain is Linear element protein rec27 (125 aa).

Residues 45–104 (KTNIENEKKAFIKDVSQVQQKIKEFEIQKANQIKQLNEEKLSIEARKQQLEIEIRNQLLQ) are a coiled coil.

In terms of assembly, component of linear elements (LinEs), which are similar to synaptonemal complexes, at least composed of rec27, rec25, rec10 and mug20.

The protein resides in the cytoplasm. It is found in the nucleus. It localises to the chromosome. Its function is as follows. During meiotic DNA recombination, binds to and activates DNA double-strand break (DSB) hotspot sites. The sequence is that of Linear element protein rec27 from Schizosaccharomyces pombe (strain 972 / ATCC 24843) (Fission yeast).